We begin with the raw amino-acid sequence, 266 residues long: MIALALPAQDSGSFTPPGIDEMHLPAILPWGAHDGFSKQMLLVILSVVIIATFFILAARKQQLVPGKLQFAGEMAYGFVRNGIAKDIIGGKDFIKYVPLLFSLFFFILVNNIYGAIPVIQLPSFSHVGGAYVMAGIVYFTWIIIGIKKNGLKYFKLATVPSGVPWYILPIVVPIEIISNFLVRPVTHSLRLFATMLAGHLIVMLAGSGIEFLVMQENVLLKGASVLVLVGAVAMYMLEALIMALQAYVFTLLTAIYIEGALHADSH.

A run of 6 helical transmembrane segments spans residues 38–58, 99–119, 126–146, 162–182, 191–211, and 224–244; these read KQML…ILAA, LLFS…IPVI, HVGG…IIGI, GVPW…NFLV, LFAT…GIEF, and SVLV…IMAL.

Belongs to the ATPase A chain family. As to quaternary structure, F-type ATPases have 2 components, CF(1) - the catalytic core - and CF(0) - the membrane proton channel. CF(1) has five subunits: alpha(3), beta(3), gamma(1), delta(1), epsilon(1). CF(0) has three main subunits: a(1), b(2) and c(9-12). The alpha and beta chains form an alternating ring which encloses part of the gamma chain. CF(1) is attached to CF(0) by a central stalk formed by the gamma and epsilon chains, while a peripheral stalk is formed by the delta and b chains.

Its subcellular location is the cell membrane. Functionally, key component of the proton channel; it plays a direct role in the translocation of protons across the membrane. In Paenarthrobacter aurescens (strain TC1), this protein is ATP synthase subunit a.